Reading from the N-terminus, the 137-residue chain is Methylglyoxal synthase (137 aa).

The region spanning 1–137 (MKIALIAHDK…NLVRGGEPNV (137 aa)) is the MGS-like domain. Residues H8, K12, 34–37 (TGTT), and 54–55 (SG) each bind substrate. The active-site Proton donor/acceptor is D60. H87 is a substrate binding site.

It belongs to the methylglyoxal synthase family.

It catalyses the reaction dihydroxyacetone phosphate = methylglyoxal + phosphate. Its function is as follows. Catalyzes the formation of methylglyoxal from dihydroxyacetone phosphate. In Bacillus velezensis (strain DSM 23117 / BGSC 10A6 / LMG 26770 / FZB42) (Bacillus amyloliquefaciens subsp. plantarum), this protein is Methylglyoxal synthase.